A 457-amino-acid chain; its full sequence is Glycine receptor subunit alpha-1 (457 aa).

A signal peptide spans 1–28 (MYSFNTLRLYLWETIVFFSLAASKEAEA). At 29–250 (ARSASKPMSP…RFHLERQMGY (222 aa)) the chain is on the extracellular side. N-linked (GlcNAc...) asparagine glycosylation occurs at asparagine 66. Residues arginine 93 and serine 157 each contribute to the glycine site. Cysteine 166 and cysteine 180 are disulfide-bonded. Glutamate 220 and aspartate 222 together coordinate Zn(2+). The cysteines at positions 226 and 237 are disulfide-linked. A strychnine-binding site is contributed by 230-235 (YNTGKF). Threonine 232 provides a ligand contact to glycine. Zn(2+) is bound at residue histidine 243. Residues 251–272 (YLIQMYIPSLLIVILSWISFWI) traverse the membrane as a helical segment. Over 273–277 (NMDAA) the chain is Cytoplasmic. The chain crosses the membrane as a helical span at residues 278–298 (PARVGLGITTVLTMTTQSSGS). The Extracellular segment spans residues 299–309 (RASLPKVSYVK). Residues 310-330 (AIDIWMAVCLLFVFSALLEYA) traverse the membrane as a helical segment. The Cytoplasmic portion of the chain corresponds to 331 to 425 (AVNFVSRQHK…FIQRAKKIDK (95 aa)). The segment at 391-410 (KGANNSNTTNPPPAPSKSPE) is disordered. The helical transmembrane segment at 426–446 (ISRIGFPMAFLIFNMFYWIIY) threads the bilayer. The Extracellular segment spans residues 447–457 (KIVRREDVHNQ).

Belongs to the ligand-gated ion channel (TC 1.A.9) family. Glycine receptor (TC 1.A.9.3) subfamily. GLRA1 sub-subfamily. Interacts with GLRB to form heteropentameric channels; this is probably the predominant form in vivo. Heteropentamer composed of four GLRA1 subunits and one GLRB subunit. Heteropentamer composed of two GLRA1 and three GLRB. Heteropentamer composed of three GLRA1 and two GLRB. Homopentamer (in vitro). Both homopentamers and heteropentamers form functional ion channels, but their characteristics are subtly different. As to expression, detected on spinal cord neurons (at protein level). Detected in spinal cord.

Its subcellular location is the postsynaptic cell membrane. It localises to the synapse. The protein resides in the perikaryon. The protein localises to the cell projection. It is found in the dendrite. Its subcellular location is the cell membrane. The enzyme catalyses chloride(in) = chloride(out). With respect to regulation, channel opening is triggered by extracellular glycine. Channel characteristics depend on the subunit composition; heteropentameric channels are activated by lower glycine levels and display faster desensitization. Functionally, subunit of heteromeric glycine-gated chloride channels. Plays an important role in the down-regulation of neuronal excitability. Contributes to the generation of inhibitory postsynaptic currents. Channel activity is potentiated by ethanol. Potentiation of channel activity by intoxicating levels of ethanol contribute to the sedative effects of ethanol. This chain is Glycine receptor subunit alpha-1 (GLRA1), found in Bos taurus (Bovine).